We begin with the raw amino-acid sequence, 130 residues long: MRLKGRKIFGGKVRGTALVSRRPLSFLGGVDPNTGVIIDVESDIRGENVKDKILVFPRGKGSTVGSYIVYQLKKNGVAPKAIVVEEAETIVATGAIIAGIPMVDKIDTSKIRSGQIIEVDADKGEVNVEE.

The active-site Proton acceptor is the serine 62.

It belongs to the AcnX type II small subunit family. Heterodimer composed of a large subunit (PMDh-L) and a small subunit (PMDh-S).

The enzyme catalyses (R)-5-phosphomevalonate = (2E)-3-methyl-5-phosphooxypent-2-enoate + H2O. The protein operates within isoprenoid biosynthesis; isopentenyl diphosphate biosynthesis via mevalonate pathway. In terms of biological role, component of a hydro-lyase that catalyzes the dehydration of mevalonate 5-phosphate (MVA5P) to form trans-anhydromevalonate 5-phosphate (tAHMP). Involved in the archaeal mevalonate (MVA) pathway, which provides fundamental precursors for isoprenoid biosynthesis, such as isopentenyl diphosphate (IPP) and dimethylallyl diphosphate (DMAPP). The polypeptide is Phosphomevalonate dehydratase small subunit (Thermococcus sibiricus (strain DSM 12597 / MM 739)).